Reading from the N-terminus, the 196-residue chain is Dephospho-CoA kinase (196 aa).

One can recognise a DPCK domain in the interval 3-196 (RIGLTGNIGC…KVYEELTRDP (194 aa)). 11-16 (GCGKST) provides a ligand contact to ATP.

This sequence belongs to the CoaE family.

The protein resides in the cytoplasm. The catalysed reaction is 3'-dephospho-CoA + ATP = ADP + CoA + H(+). The protein operates within cofactor biosynthesis; coenzyme A biosynthesis; CoA from (R)-pantothenate: step 5/5. In terms of biological role, catalyzes the phosphorylation of the 3'-hydroxyl group of dephosphocoenzyme A to form coenzyme A. This chain is Dephospho-CoA kinase, found in Aquifex aeolicus (strain VF5).